Reading from the N-terminus, the 766-residue chain is MRQDKLTGSLRRGGRCLKRQGGGGVGTILSNVLKKRSCISRTAPRLLCTLEPGVDTKLKFTLEPSLGQNGFQQWYDALKAVARLSTGIPKEWRRKVWLTLADHYLHSIAIDWDKTMRFTFNERSNPDDDSMGIQIVKDLHRTGCSSYCGQEAEQDRVVLKRVLLAYARWNKNVGYCQGFNILAALILEVMEGNEGDALKIMIYLIDKVLPESYFVNNLRALSVDMAVFRDLLRLKLPELSQHLDTLQRTANKESGGGYEPPLTNVFTMQWFLTLFATCLPNHTVLKIWDSVFFEGSEIILRVSLAIWAKLGEQIECCETADEFYGTMGRLTQEMLEQDLLQSHELMQTVYSMAPFPFPQLAELREKYTYNITPFPATIKPTSVSGRHSKARDSDDENGPDDEDAVASAVGCLGPLSGLLAPELQKYQKQIKEATEEQTLRSNNIAELSPGAINSCRSEYHAAFNSMMMERMTTDINALKRQYSRIKKKQQQQLHQVYIRADKGPVTSILPSQANSSPVINHLLLGKKMKITNRAAKNAVIHVPGHPGGKISPVPYEDIKTKLNSPWRTHIRVHKKNMPRTKSHLGCGDTVGLIEEQSEGCKASSLGAAEEFPSGRTVTAHSEGSSGDGDGGGSTPRTIEGQSPEPVFGDADVDVAAVQVKLEALELNQRDAAAETEPKVHFPCQRHASELADAPGENQTAIKLLPGSTSKTPIFSPFPSVKPLRKSATARNLGLYGPTERTPNVHFPQMSRGFNKSGIGNSSTKKR.

Positions 87-295 (GIPKEWRRKV…KIWDSVFFEG (209 aa)) constitute a Rab-GAP TBC domain. A disordered region spans residues 380–406 (PTSVSGRHSKARDSDDENGPDDEDAVA). The span at 393 to 404 (SDDENGPDDEDA) shows a compositional bias: acidic residues. A coiled-coil region spans residues 422–491 (ELQKYQKQIK…YSRIKKKQQQ (70 aa)). Disordered regions lie at residues 603–647 (SSLG…EPVF) and 731–766 (NLGLYGPTERTPNVHFPQMSRGFNKSGIGNSSTKKR). Phosphoserine is present on Ser-642. Positions 751-766 (RGFNKSGIGNSSTKKR) are enriched in polar residues.

It is found in the cell membrane. Its function is as follows. May act as a GTPase-activating protein for Rab family protein(s). The sequence is that of TBC1 domain family member 30 (Tbc1d30) from Mus musculus (Mouse).